The primary structure comprises 349 residues: Small ribosomal subunit biogenesis GTPase RsgA (349 aa).

The segment covering 1 to 11 has biased composition (basic residues); sequence MSKKKLSKGQQ. Residues 1 to 29 are disordered; sequence MSKKKLSKGQQRRVSANHQRRLKKTESKV. A CP-type G domain is found at 102-272; the sequence is HSVLTRPDYY…VIDSPGVREF (171 aa). Residues 158–161 and 212–220 each bind GTP; these read NKID and GQSGVGKSS. Residues C296, C301, H303, and C309 each contribute to the Zn(2+) site.

Belongs to the TRAFAC class YlqF/YawG GTPase family. RsgA subfamily. In terms of assembly, monomer. Associates with 30S ribosomal subunit, binds 16S rRNA. Zn(2+) serves as cofactor.

The protein resides in the cytoplasm. One of several proteins that assist in the late maturation steps of the functional core of the 30S ribosomal subunit. Helps release RbfA from mature subunits. May play a role in the assembly of ribosomal proteins into the subunit. Circularly permuted GTPase that catalyzes slow GTP hydrolysis, GTPase activity is stimulated by the 30S ribosomal subunit. The sequence is that of Small ribosomal subunit biogenesis GTPase RsgA from Pectobacterium carotovorum subsp. carotovorum (strain PC1).